We begin with the raw amino-acid sequence, 316 residues long: MTLRARHLLGIEHLAPDEIVTLLDLADRYADLNRRPDKHGDALDGLTQINMFFENSTRTQASFEIAGKRLGADVMNMEVRASSIKKGETLIDTAMTLNAMHPDLLVVRHPHSGAVNLLAEKVNCAVLNAGDGRHEHPTQALLDALTIRRAKGKLHRLNVAICGDIAHSRVARSNILLLGKMENRIRLVGPRTLMPAEIAELGVEVYEDMKAGLDGVDVVMMLRLQKERMDGGFIPSEREYYHRYGLDAEKLAYAKPDAIVMHPGPMNRGVEIDGTLADDINRSVIQEQVEMGVAVRMAAMDLLARNLRAAREGVRA.

Carbamoyl phosphate contacts are provided by R58 and T59. An L-aspartate-binding site is contributed by K86. Residues R108, H136, and Q139 each contribute to the carbamoyl phosphate site. L-aspartate is bound by residues R169 and R223. Residues G264 and P265 each contribute to the carbamoyl phosphate site.

It belongs to the aspartate/ornithine carbamoyltransferase superfamily. ATCase family. As to quaternary structure, heterododecamer (2C3:3R2) of six catalytic PyrB chains organized as two trimers (C3), and six regulatory PyrI chains organized as three dimers (R2).

The catalysed reaction is carbamoyl phosphate + L-aspartate = N-carbamoyl-L-aspartate + phosphate + H(+). It functions in the pathway pyrimidine metabolism; UMP biosynthesis via de novo pathway; (S)-dihydroorotate from bicarbonate: step 2/3. Its function is as follows. Catalyzes the condensation of carbamoyl phosphate and aspartate to form carbamoyl aspartate and inorganic phosphate, the committed step in the de novo pyrimidine nucleotide biosynthesis pathway. The protein is Aspartate carbamoyltransferase catalytic subunit of Dinoroseobacter shibae (strain DSM 16493 / NCIMB 14021 / DFL 12).